The sequence spans 318 residues: uncharacterized protein (318 aa).

Positions 1–22 are enriched in basic and acidic residues; sequence MKASQERSEARRTAHSVKEKKY. Disordered stretches follow at residues 1 to 29 and 293 to 318; these read MKAS…ASPR and DDGD…DDDE.

This is an uncharacterized protein from Ictalurid herpesvirus 1 (strain Auburn) (IcHV-1).